Consider the following 301-residue polypeptide: Methionyl-tRNA formyltransferase (301 aa).

Residue 109–112 (SLLP) participates in (6S)-5,6,7,8-tetrahydrofolate binding.

The protein belongs to the Fmt family.

It catalyses the reaction L-methionyl-tRNA(fMet) + (6R)-10-formyltetrahydrofolate = N-formyl-L-methionyl-tRNA(fMet) + (6S)-5,6,7,8-tetrahydrofolate + H(+). Its function is as follows. Attaches a formyl group to the free amino group of methionyl-tRNA(fMet). The formyl group appears to play a dual role in the initiator identity of N-formylmethionyl-tRNA by promoting its recognition by IF2 and preventing the misappropriation of this tRNA by the elongation apparatus. This chain is Methionyl-tRNA formyltransferase, found in Ruegeria pomeroyi (strain ATCC 700808 / DSM 15171 / DSS-3) (Silicibacter pomeroyi).